The following is a 237-amino-acid chain: Sugar fermentation stimulation protein homolog (237 aa).

Belongs to the SfsA family.

This Pseudomonas syringae pv. tomato (strain ATCC BAA-871 / DC3000) protein is Sugar fermentation stimulation protein homolog.